The following is a 152-amino-acid chain: Ribosome maturation factor RimP (152 aa).

The protein belongs to the RimP family.

The protein resides in the cytoplasm. Required for maturation of 30S ribosomal subunits. This Burkholderia orbicola (strain MC0-3) protein is Ribosome maturation factor RimP.